The chain runs to 92 residues: Defensin-like protein 96 (92 aa).

An N-terminal signal peptide occupies residues 1-29 (MGSLRLSTVAIAVVVCLSILLISPTEVDG). 4 cysteine pairs are disulfide-bonded: Cys33–Cys80, Cys40–Cys65, Cys49–Cys77, and Cys53–Cys79.

This sequence belongs to the DEFL family.

It localises to the secreted. The chain is Defensin-like protein 96 from Arabidopsis thaliana (Mouse-ear cress).